A 2842-amino-acid polypeptide reads, in one-letter code: Adenomatous polyposis coli protein (2842 aa).

Position 2 is an N-acetylalanine (Ala-2). A coiled-coil region spans residues 2–62 (AAASYDQLLK…GSIEDETMTS (61 aa)). A phosphoserine mark is found at Ser-105 and Ser-109. A coiled-coil region spans residues 125-260 (SRESTGYLEE…ASHEAERQLE (136 aa)). The tract at residues 238-304 (AEAERSSQSK…THSAPRRLTS (67 aa)) is disordered. The span at 239–259 (EAERSSQSKHETASHEAERQL) shows a compositional bias: basic and acidic residues. Polar residues predominate over residues 268–279 (NLATSGSGQSSA). 7 ARM repeats span residues 451–493 (LMKL…HYSV), 503–545 (LTNL…IASV), 546–589 (LRNL…VLSA), 590–636 (LWNL…GGGI), 637–681 (LRNV…ACGT), 682–723 (LWNL…SAAA), and 724–765 (LRNL…LDAQ). Ser-742, Ser-746, and Ser-778 each carry phosphoserine. Positions 828–877 (VLPSSSSSRGSLDSSRSEKDRSLERERGIGLSTYHSATENPGTSSKRGLQ) are disordered. Positions 831–841 (SSSSSRGSLDS) are enriched in low complexity. Positions 842-855 (SRSEKDRSLERERG) are enriched in basic and acidic residues. A compositionally biased stretch (polar residues) spans 860-877 (TYHSATENPGTSSKRGLQ). Phosphoserine is present on Ser-906. Disordered regions lie at residues 921-942 (RRSS…ESSN) and 956-988 (RSSN…SEDD). Positions 931-942 (NTHNFAKSESSN) are enriched in polar residues. Residues 959–969 (NDSLNSVTSSD) show a composition bias toward low complexity. Phosphoserine is present on residues Ser-985, Ser-1036, and Ser-1040. The tract at residues 1018 to 1167 (ELDTPINYSL…TNYSIKYNEE (150 aa)) is interaction with catenins. Disordered stretches follow at residues 1058-1078 (IKQN…VYSE), 1092-1166 (GQQE…KYNE), 1188-1249 (SQKP…CKVP), and 1306-1373 (ENDV…PEHY). 2 stretches are compositionally biased toward polar residues: residues 1066–1078 (SRSQ…VYSE) and 1103–1128 (RGTN…QSLC). Residues 1144-1157 (RYSEEEQHEEEERP) are compositionally biased toward basic and acidic residues. 2 stretches are compositionally biased toward low complexity: residues 1188-1200 (SQKP…KTPS) and 1209-1223 (NSPS…SSNA). 2 stretches are compositionally biased toward polar residues: residues 1224 to 1242 (KRQS…QTPK) and 1323 to 1340 (VSQS…SGLA). Low complexity predominate over residues 1352–1363 (SSGAKSPSKSGA). Phosphoserine is present on residues Ser-1357, Ser-1368, Ser-1382, Ser-1389, and Ser-1392. Disordered stretches follow at residues 1398–1474 (IASS…VSAA), 1525–1568 (PPVQ…SDDD), 1584–1609 (KSSR…KPSQ), and 1661–1711 (ESPP…IPDL). Thr-1435 carries the phosphothreonine modification. The span at 1435-1444 (TPPPPPPPQP) shows a compositional bias: pro residues. Acidic residues predominate over residues 1532–1546 (NGNETEPEQPEESNE). Basic and acidic residues predominate over residues 1547 to 1562 (NQDKEVEKPDSEKDLL). Ser-1565 bears the Phosphoserine mark. Residues 1681-1700 (EFEKRDTIPTEGRSTDEAQR) are compositionally biased toward basic and acidic residues. A Phosphoserine modification is found at Ser-1714. Polar residues predominate over residues 1748–1762 (VQQASMTSSGTNKNQ). Disordered regions lie at residues 1748–1950 (VQQA…EKLQ), 1963–2010 (RNSS…APKS), and 2043–2067 (SSAM…PRKV). The residue at position 1772 (Ser-1772) is a Phosphoserine. Composition is skewed to basic and acidic residues over residues 1783 to 1792 (YRTRVRKNTD) and 1804 to 1833 (SDNK…DRVR). 3 positions are modified to phosphoserine: Ser-1859, Ser-1861, and Ser-1862. Residues 1864-1891 (DFDDDDVDLSREKAELRKGKESKDSEAK) form a highly charged region. The span at 1871-1894 (DLSREKAELRKGKESKDSEAKVTC) shows a compositional bias: basic and acidic residues. Over residues 1899 to 1911 (SSSQQSARKAQAS) the composition is skewed to low complexity. A compositionally biased stretch (polar residues) spans 1927–1936 (EQPTFPQSSK). Residues 1937–1949 (DVPDRGAATDEKL) show a composition bias toward basic and acidic residues. Phosphoserine occurs at positions 1969 and 1971. Residues 2034–2058 (EDDLLRECISSAMPKKRRPSRLKGE) form an interaction with AXIN1 region. Phosphoserine is present on residues Ser-2087, Ser-2092, Ser-2125, Ser-2129, Ser-2130, and Ser-2132. 3 disordered regions span residues 2148-2173 (FHLT…PGEK), 2234-2641 (PGVR…AESK), and 2664-2842 (CPIN…VTSV). Thr-2151 is modified (phosphothreonine). A basic region region spans residues 2167–2674 (ILKPGEKSTL…PINNPRSGRS (508 aa)). Composition is skewed to polar residues over residues 2257-2272 (ASKS…TSPR) and 2283-2347 (SPIT…QLPR). Ser-2260, Ser-2270, and Ser-2283 each carry phosphoserine. Residues 2348-2369 (TSSPSTASTKSSGSGKMSYTSP) are compositionally biased toward low complexity. Composition is skewed to polar residues over residues 2370 to 2411 (GRQL…NGSN) and 2418 to 2427 (RMSSTKSSGS). A compositionally biased stretch (low complexity) spans 2459–2477 (SASFESLSPSSRPDSPTRS). Phosphoserine is present on residues Ser-2473 and Ser-2535. The segment at 2475-2842 (TRSQAQTPVL…HSGSYLVTSV (368 aa)) is interaction with DLG1. Over residues 2518 to 2535 (SDGRPSKRHDIARSHSES) the composition is skewed to basic and acidic residues. The span at 2555-2568 (SSSLPRVSTWRRTG) shows a compositional bias: polar residues. A Phosphoserine modification is found at Ser-2569. The segment covering 2569–2579 (SSSSILSASSE) has biased composition (low complexity). A compositionally biased stretch (basic and acidic residues) spans 2580–2592 (SSEKAKSEDEKHV). The segment covering 2629–2638 (TTSSGAASGA) has biased composition (low complexity). Polar residues-rich tracts occupy residues 2668 to 2679 (NPRSGRSPTGNT) and 2702 to 2713 (GKQSVGSGSPVQ). Phosphoserine occurs at positions 2671 and 2674. Positions 2674-2842 (SPTGNTPPVI…HSGSYLVTSV (169 aa)) are interaction with MAPRE1. Thr-2679 bears the Phosphothreonine mark. Ser-2710 and Ser-2723 each carry phosphoserine. Over residues 2762-2773 (SSSSSSKHSSPS) the composition is skewed to low complexity. The segment covering 2783–2809 (FNYNPSPRKSSADSTSARPSQIPTPVG) has biased composition (polar residues). Position 2788 is a phosphoserine (Ser-2788). The Microtubule tip localization signal motif lies at 2802-2805 (SQIP). The PDZ-binding motif lies at 2840–2842 (TSV).

Belongs to the adenomatous polyposis coli (APC) family. Forms homooligomers. Found in a complex consisting of ARHGEF4, APC and CTNNB1. Found in a complex composed of MACF1, APC, AXIN1, CTNNB1 and GSK3B. The complex composed, at least, of APC, CTNNB1 and GSK3B interacts with JPT1; the interaction requires the inactive form of GSK3B (phosphorylated at 'Ser-9'). Interacts with APC2. Interacts with DLG1 (via PDZ domains) and DLG3 (via PDZ domains). Interacts with alpha- and beta-catenins. Interacts with AXIN1 (via RGS domain). Interacts with ARHGEF4 (via N-terminus). Interacts (via C-terminal residues 2674-2843) with MAPRE1 (via C-terminal residues 206-211); the interaction inhibits association with and bundling of F-actin. Interacts with MAPRE2 and MAPRE3 (via C-terminus). Interacts with DIAPH1; DIAPH1 acts as a scaffold protein for MAPRE1 and APC to stabilize microtubules and promote cell migration. Interacts with DIAPH2. Interacts with SCRIB; may mediate APC targeting to adherens junctions of epithelial cells. Interacts with SPATA13 (via N-terminus and SH3 domain). Interacts with ASAP1 (via SH3 domain). Interacts (at the cell membrane) with AMER1 and AMER2 (via ARM repeats). Interacts with KHDRBS1. Interacts with actin; binds both to F-actin and actin filament bundles. Post-translationally, phosphorylated; phosphorylation enhances the F-actin bundling activity. Phosphorylated by GSK3B. Ubiquitinated, leading to its degradation by the proteasome. Ubiquitination is facilitated by Axin. Deubiquitinated by ZRANB1/TRABID.

Its subcellular location is the cell junction. It localises to the adherens junction. The protein resides in the cytoplasm. The protein localises to the cytoskeleton. It is found in the cell projection. Its subcellular location is the lamellipodium. It localises to the ruffle membrane. The protein resides in the cell membrane. Tumor suppressor. Promotes rapid degradation of CTNNB1 and participates in Wnt signaling as a negative regulator. APC activity is correlated with its phosphorylation state. Activates the GEF activity of SPATA13 and ARHGEF4. Plays a role in hepatocyte growth factor (HGF)-induced cell migration. Required for MMP9 up-regulation via the JNK signaling pathway in colorectal tumor cells. Associates with both microtubules and actin filaments, components of the cytoskeleton. Plays a role in mediating the organization of F-actin into ordered bundles. Functions downstream of Rho GTPases and DIAPH1 to selectively stabilize microtubules. Acts as a mediator of ERBB2-dependent stabilization of microtubules at the cell cortex. It is required for the localization of MACF1 to the cell membrane and this localization of MACF1 is critical for its function in microtubule stabilization. The polypeptide is Adenomatous polyposis coli protein (Apc) (Rattus norvegicus (Rat)).